The primary structure comprises 202 residues: Dephospho-CoA kinase (202 aa).

In terms of domain architecture, DPCK spans 6–202; it reads KVSITGDLSS…EYFYALKGAL (197 aa). 14 to 19 is an ATP binding site; the sequence is SSGKTE.

It belongs to the CoaE family.

It localises to the cytoplasm. It carries out the reaction 3'-dephospho-CoA + ATP = ADP + CoA + H(+). Its pathway is cofactor biosynthesis; coenzyme A biosynthesis; CoA from (R)-pantothenate: step 5/5. Functionally, catalyzes the phosphorylation of the 3'-hydroxyl group of dephosphocoenzyme A to form coenzyme A. The sequence is that of Dephospho-CoA kinase from Chlamydia felis (strain Fe/C-56) (Chlamydophila felis).